The sequence spans 303 residues: 1-acyl-sn-glycerol-3-phosphate acyltransferase (303 aa).

The HXXXXD motif motif lies at 82-87; that stretch reads HQSTLD. The segment at 278 to 303 is disordered; it reads NEPVPSVSISNDVNTHNEGSSVKKMH. Residues 284–297 show a composition bias toward polar residues; that stretch reads VSISNDVNTHNEGS.

This sequence belongs to the 1-acyl-sn-glycerol-3-phosphate acyltransferase family.

The protein resides in the lipid droplet. It catalyses the reaction a 1-acyl-sn-glycero-3-phosphate + an acyl-CoA = a 1,2-diacyl-sn-glycero-3-phosphate + CoA. The catalysed reaction is a 1-acyl-sn-glycero-3-phosphocholine + an acyl-CoA = a 1,2-diacyl-sn-glycero-3-phosphocholine + CoA. It carries out the reaction a 1-acyl-sn-glycero-3-phosphoethanolamine + an acyl-CoA = a 1,2-diacyl-sn-glycero-3-phosphoethanolamine + CoA. The enzyme catalyses 1-hexadecanoyl-sn-glycero-3-phosphate + (9Z)-octadecenoyl-CoA = 1-hexadecanoyl-2-(9Z-octadecenoyl)-sn-glycero-3-phosphate + CoA. It catalyses the reaction 1-octadecanoyl-sn-glycero-3-phosphate + (9Z)-octadecenoyl-CoA = 1-octadecanoyl-2-(9Z-octadecenoyl)-sn-glycero-3-phosphate + CoA. The catalysed reaction is 1-(9Z-octadecenoyl)-sn-glycero-3-phospho-L-serine + (9Z)-octadecenoyl-CoA = 1,2-di-(9Z)-octadecenoyl-sn-glycero-3-phospho-L-serine + CoA. It carries out the reaction a 1-acyl-sn-glycero-3-phospho-(1D-myo-inositol) + (9Z)-octadecenoyl-CoA = a 1-acyl-2-(9Z-octadecenoyl)-sn-glycero-3-phospho-(1D-myo-inositol) + CoA. The enzyme catalyses 1-heptadecanoyl-sn-glycero-3-phosphate + (9Z)-octadecenoyl-CoA = 1-heptadecanoyl-2-(9Z)-octadecenoyl-sn-glycero-3-phosphate + CoA. It catalyses the reaction 1-heptadecanoyl-sn-glycero-3-phosphate + dodecanoyl-CoA = 1-heptadecanoyl-2-dodecanoyl-sn-glycero-3-phosphate + CoA. The catalysed reaction is 1-heptadecanoyl-sn-glycero-3-phosphate + tetradecanoyl-CoA = 1-heptadecanoyl-2-tetradecanoyl-sn-glycero-3-phosphate + CoA. It functions in the pathway phospholipid metabolism; CDP-diacylglycerol biosynthesis; CDP-diacylglycerol from sn-glycerol 3-phosphate: step 2/3. In terms of biological role, acyltransferase that catalyzes the sn-2-specific, acyl-CoA-dependent acylation of lysophosphatidic acid (LPA) to phosphatidic acid (PA) in lipid particles. Together with ALE1, plays a central role in PA biosynthesis. PA is the intermediate, from which all glycerophospholipids are synthesized. Can also acylate lysophosphoinositol (LPI) and lysophosphoserine (LPS). The fatty acyl substrates include 18:1-acyl-CoA, 14:0-acyl-CoA, 12:0-acyl-CoA and 10:0-acyl-CoA. This chain is 1-acyl-sn-glycerol-3-phosphate acyltransferase, found in Saccharomyces cerevisiae (strain ATCC 204508 / S288c) (Baker's yeast).